We begin with the raw amino-acid sequence, 378 residues long: Aminotransferase apf4 (378 aa).

Arginine 88 is a pyridoxal 5'-phosphate binding site. Lysine 189 carries the N6-(pyridoxal phosphate)lysine modification. Residue glutamate 228 participates in pyridoxal 5'-phosphate binding. The tract at residues 359–378 is disordered; sequence ERGHNGQPTADPTRVIEMPE.

The protein belongs to the class-IV pyridoxal-phosphate-dependent aminotransferase family. It depends on pyridoxal 5'-phosphate as a cofactor.

Its pathway is secondary metabolite biosynthesis. In terms of biological role, aminotransferase; part of the gene cluster that mediates the biosynthesis of the cyclic tetrapeptide apicidin F (APF). The non-ribosomal peptide synthetase apf1 incorporates four different amino acids to produce apicidin F: L-phenylalanine, D-pipecolic acid (D-pip), N-methoxy-L-tryptophan and L-2-aminooctanedioic acid. L-Phenylalanine is the only proteinogenic amino acid directly used by apf1. The 3 other apf1 substrates are non-proteinogenic and have to be modified by other enzymes of the cluster. Lysine is converted to delta-1-pyrroline-5-carboxylate (P5C) which is reduced to L-pipecolic acid (L-pip) by apf3. L-pip is epimerized to D-pip, probably by apf1 activity, prior to incorporation. L-Tryptophan is N-oxidyzed by one of the cytochrome P450 monooxygenases (apf7 or apf8), and further methylated at the hydroxy group by the O-methyltransferase apf6 to yield N-methoxy-L-tryptophan. The synthesis of the fourth apf1 substrate is more complex. The fatty acid synthase apf5 is involved in the synthesis of the octanoic acid backbone of L-2-aminooctanedioic acid by fixing one acetyl-CoA unit and three malonyl-CoA units. Then one of the cytochrome P450 monooxygenases (apf7 or apf8) may oxidize this backbone to 2-oxooctanoic acid. The aminotransferase apf4 is predicted to catalyze the exchange of the keto group with an amino group. The next step would be the oxidation of 2-aminooctanoic acid by one of the cytochrome P450 monooxygenases (apf7 or apf8). The last step is the oxidation of 2-amino-8-hydroxyoctanoic acid to 2-aminooctanedioic acid is catalyzed by the FAD-dependent monooxygenase apf9. The sequence is that of Aminotransferase apf4 from Gibberella fujikuroi (strain CBS 195.34 / IMI 58289 / NRRL A-6831) (Bakanae and foot rot disease fungus).